A 478-amino-acid chain; its full sequence is Hexokinase (478 aa).

The region spanning 21 to 465 (EYLLKELTEL…LGAGAAIIAA (445 aa)) is the Hexokinase domain. Residues 75–208 (TGKEMGDYLA…KVPIEVVALI (134 aa)) are hexokinase small subdomain. Lys111 lines the ATP pocket. The interval 151-177 (PLGFTFSYPASQGSINEGYLQRWTKGF) is glucose-binding. The interval 209–454 (NDTTGTLVAS…DPIVIVPAED (246 aa)) is hexokinase large subdomain.

This sequence belongs to the hexokinase family. Monomer.

It catalyses the reaction a D-hexose + ATP = a D-hexose 6-phosphate + ADP + H(+). It carries out the reaction D-fructose + ATP = D-fructose 6-phosphate + ADP + H(+). The catalysed reaction is D-glucose + ATP = D-glucose 6-phosphate + ADP + H(+). The protein operates within carbohydrate metabolism; hexose metabolism. It functions in the pathway carbohydrate degradation; glycolysis; D-glyceraldehyde 3-phosphate and glycerone phosphate from D-glucose: step 1/4. Functionally, catalyzes the phosphorylation of hexose, such as D-glucose and D-fructose, to hexose 6-phosphate (D-glucose 6-phosphate and D-fructose 6-phosphate, respectively). Mediates the initial step of glycolysis by catalyzing phosphorylation of D-glucose to D-glucose 6-phosphate. This chain is Hexokinase (HXK), found in Schwanniomyces occidentalis (Yeast).